The chain runs to 979 residues: Receptor-type tyrosine-protein phosphatase-like N (979 aa).

Residues 1-34 (MRLPGRPGGPGGSGGLRVLLCLLLLGSRPGGCNA) form the signal peptide. Residues 35–131 (ISAHGCLFDR…HPRDRSGLVP (97 aa)) are RESP18 homology domain. The Lumenal segment spans residues 35-575 (ISAHGCLFDR…RPAHSTSPMR (541 aa)). The cysteines at positions 53 and 62 are disulfide-linked. Basic and acidic residues predominate over residues 113–127 (IPRLRPPEPHPRDRS). Disordered regions lie at residues 113 to 171 (IPRL…GAGS), 248 to 272 (GSKGMFGAHPGHSYGDPPGPPPAQL), 285 to 332 (SQVP…EQPD), and 391 to 466 (EQVQ…STRP). S308 and S309 each carry phosphoserine. Residues 400 to 409 (EPPPPMPSLP) are compositionally biased toward pro residues. A sufficient for dimerization of proICA512 region spans residues 449–575 (SPLGQNQPTM…RPAHSTSPMR (127 aa)). Positions 451–466 (LGQNQPTMAGQPSTRP) are enriched in polar residues. Residues N506 and N524 are each glycosylated (N-linked (GlcNAc...) asparagine). A helical membrane pass occupies residues 576–600 (SVLLTLVALAGVAGLLVALAVALCV). Residues 601-732 (RQHARQRDKE…PNTCATAQGE (132 aa)) form a sufficient for dimerization of proICA512 region. At 601–979 (RQHARQRDKE…VNAILKALPQ (379 aa)) the chain is on the cytoplasmic side. Positions 643–680 (NRAEGPPEPSRVSSVSSQFSDAAQASPSSHSSTPSWCE) are disordered. Residues 652–677 (SRVSSVSSQFSDAAQASPSSHSSTPS) show a composition bias toward low complexity. The region spanning 709–969 (LAKEWQALCA…EFALTAVAEE (261 aa)) is the Tyrosine-protein phosphatase domain. K754 is covalently cross-linked (Glycyl lysine isopeptide (Lys-Gly) (interchain with G-Cter in SUMO)).

Belongs to the protein-tyrosine phosphatase family. Receptor class 8 subfamily. In terms of assembly, homodimer; shown for the unprocessed protein (proICA512) in the endoplasmic reticulum and resolved during protein maturation as ICA512-TMF seems to be predominantly monomeric in secretory granules; however, ICA512-CCF interacts with ICA512-TMF disrupting the ICA512-TMF:SNTB2 complex. The isolated lumenal RESP18 homology domain has been shown to form disulfide-linked homooligomers. Interacts (via cytoplasmic domain) with phosphorylated SNTB2; this protects PTPRN against cleavage by CAPN1 to produce ICA512-CCF. Dephosphorylation of SNTB2 upon insulin stimulation disrupts the interaction and results in PTPRN cleavage. Interacts with SNX19. ICA512-CCF interacts with PIAS4; in the nucleus. Interacts with STAT5B (phosphorylated); down-regulated by ICA512-CCF sumoylation; ICA512-CCF prevents STAT5B dephosphorylation; ICA512-CCF mediates interaction of STAT5B with PIAS4. Interacts (via RESP18 homology domain) with insulin and proinsulin. Interacts with PTPRN2, PTPRA and PTPRE. In terms of processing, N-glycosylated. Post-translationally, O-glycosylated. Subject to proteolytic cleavage at multiple sites. Subject to cleavage on a pair of basic residues. On exocytosis of secretory granules in pancreatic beta-cells ICA512-TMF is transiently inserted in the plasma-membrane and cleaved by mu-type calpain CPN1 to yield ICA512-CCF. In terms of processing, sumoylated at two sites including Lys-754. Sumoylation decreases interaction with STAT5. As to expression, detected in pituitary (at protein level).

Its subcellular location is the membrane. The protein resides in the cytoplasmic vesicle. It is found in the secretory vesicle membrane. The protein localises to the perikaryon. It localises to the cell projection. Its subcellular location is the axon. The protein resides in the synapse. It is found in the cell membrane. The protein localises to the endosome. It localises to the nucleus. Functionally, plays a role in vesicle-mediated secretory processes. Required for normal accumulation of secretory vesicles in hippocampus, pituitary and pancreatic islets. Required for the accumulation of normal levels of insulin-containing vesicles and preventing their degradation. Plays a role in insulin secretion in response to glucose stimuli. Required for normal accumulation of the neurotransmitters norepinephrine, dopamine and serotonin in the brain. In females, but not in males, required for normal accumulation and secretion of pituitary hormones, such as luteinizing hormone (LH) and follicle-stimulating hormone (FSH). Required to maintain normal levels of renin expression and renin release. Seems to lack intrinsic enzyme activity. May regulate catalytic active protein-tyrosine phosphatases such as PTPRA through dimerization. ICA512-TMF regulates dynamics and exocytosis of insulin secretory granules (SGs); binding of ICA512-TMF to SNTB2/beta-2-syntrophin is proposed to restrain SGs mobility and exocytosis by tethering them to the actin cytoskeleton depending on UTRN; the function is inhibited by cytoplasmic ICA512-CFF dimerizing with ICA512-TMF and displacing SNTB2. Its function is as follows. ICA512-CCF translocated to the nucleus promotes expression of insulin and other granule-related genes; the function implicates binding to and regulating activity of STAT5B probably by preventing its dephosphorylation and potentially by inducing its sumoylation by recruiting PIAS4. Enhances pancreatic beta-cell proliferation by converging with signaling by STAT5B and STAT3. ICA512-CCF located in the cytoplasm regulates dynamics and exocytosis of insulin secretory granules (SGs) by dimerizing with ICA512-TMF and displacing SNTB2 thus enhancing SGs mobility and exocytosis. The polypeptide is Receptor-type tyrosine-protein phosphatase-like N (PTPRN) (Bos taurus (Bovine)).